The sequence spans 350 residues: D-alanine--D-alanine ligase (350 aa).

The region spanning 133–334 is the ATP-grasp domain; it reads NDIFELNKIP…VSEVFDNLIG (202 aa). Position 161-216 (161-216) interacts with ATP; that stretch reads FEKTSKAVYVKPCNAGSSVGVMRAETEEELEKAIQNAFQYDRRILVEEEIIGPELQ. Mg(2+)-binding residues include aspartate 288, glutamate 300, and asparagine 302.

This sequence belongs to the D-alanine--D-alanine ligase family. Mg(2+) serves as cofactor. The cofactor is Mn(2+).

Its subcellular location is the cytoplasm. It carries out the reaction 2 D-alanine + ATP = D-alanyl-D-alanine + ADP + phosphate + H(+). Its pathway is cell wall biogenesis; peptidoglycan biosynthesis. In terms of biological role, cell wall formation. In Finegoldia magna (strain ATCC 29328 / DSM 20472 / WAL 2508) (Peptostreptococcus magnus), this protein is D-alanine--D-alanine ligase.